The chain runs to 725 residues: Antigen peptide transporter 1 (725 aa).

Over 1–8 (MAAHAWPT) the chain is Cytoplasmic. Residues 9–29 (AALLLLLVDWLLLRPVLPGIF) form a helical membrane-spanning segment. The Lumenal segment spans residues 30–38 (SLLVPEVPL). A helical transmembrane segment spans residues 39-60 (LRVWAVGLSRWAILGLGVRGVL). Residues 61-67 (GVTAGAR) are Cytoplasmic-facing. Residues 68–88 (GWLAALQPLVAALGLALPGLA) traverse the membrane as a helical segment. Residues 89 to 110 (SFRKLSAWGALREGDNAGLLHW) are Lumenal-facing. Residues 111 to 131 (NSRLDAFVLSYVAALPAAALW) form a helical membrane-spanning segment. The Cytoplasmic segment spans residues 132 to 163 (HKLGGFWAPSGHKGAGDMLCRMLGFLDSKKGR). The chain crosses the membrane as a helical span at residues 164 to 184 (LHLVLVLLILSCLGEMAIPFF). An ABC transmembrane type-1 domain is found at 164-447 (LHLVLVLLIL…LLSIYPSMQK (284 aa)). At 185 to 204 (TGRITDWILQDKTAPSFARN) the chain is on the lumenal side. Residues 205 to 225 (MWLMCILTIASTVLEFAGDGI) traverse the membrane as a helical segment. The Cytoplasmic segment spans residues 226 to 275 (YNITMGHMHSRVHGEVFRAVLHQETGFFLKNPTGSITSRVTEDTSNVCES). A helical membrane pass occupies residues 276–296 (ISDKLNLFLWYLGRGLCLLAF). Over 297 to 305 (MIWGSFYLT) the chain is Lumenal. A helical membrane pass occupies residues 306-326 (VVTLLSLPLLFLLPRRLGKVY). Over 327 to 395 (QSLAVKVQES…VTEVWTMSVS (69 aa)) the chain is Cytoplasmic. A part of the peptide-binding site region spans residues 352-397 (PTVRSFANEEGEAQKFRQKLEEMKPLNKKEALAYVTEVWTMSVSGM). Residues 396–416 (GMLLKVGILYLGGQLVVRGAV) traverse the membrane as a helical segment. Residues 417–420 (SSGN) lie on the Lumenal side of the membrane. Residues 421–441 (LVSFVLYQLQFTRAVEVLLSI) traverse the membrane as a helical segment. Residues 430-464 (QFTRAVEVLLSIYPSMQKSVGASEKIFEYLDRTPC) form a part of the peptide-binding site region. The Cytoplasmic portion of the chain corresponds to 442–725 (YPSMQKSVGA…MVEALAAPSD (284 aa)). In terms of domain architecture, ABC transporter spans 480–719 (VKFQDVSFAY…GGCYRSMVEA (240 aa)). Residues 515–523 (GPNGSGKST), 618–624 (NQLSGGQ), and glutamine 678 contribute to the ATP site. Serine 522 is a Mg(2+) binding site.

The protein belongs to the ABC transporter superfamily. ABCB family. MHC peptide exporter (TC 3.A.1.209) subfamily. Heterodimer of TAP1 and TAP2 (TAP1-TAP2). A component of the peptide loading complex (PLC), interacts via TAPBP with MHCI heterodimer; this interaction mediates peptide-MHCI assembly. Interacts with PSMB5 and PSMB8. Mg(2+) serves as cofactor.

The protein resides in the endoplasmic reticulum membrane. It catalyses the reaction a peptide antigen(in) + ATP + H2O = a peptide antigen(out) + ADP + phosphate + H(+). Functionally, ABC transporter associated with antigen processing. In complex with TAP2 mediates unidirectional translocation of peptide antigens from cytosol to endoplasmic reticulum (ER) for loading onto MHC class I (MHCI) molecules. Uses the chemical energy of ATP to export peptides against the concentration gradient. During the transport cycle alternates between 'inward-facing' state with peptide binding site facing the cytosol to 'outward-facing' state with peptide binding site facing the ER lumen. Peptide antigen binding to ATP-loaded TAP1-TAP2 induces a switch to hydrolysis-competent 'outward-facing' conformation ready for peptide loading onto nascent MHCI molecules. Subsequently ATP hydrolysis resets the transporter to the 'inward facing' state for a new cycle. As a component of the peptide loading complex (PLC), acts as a molecular scaffold essential for peptide-MHCI assembly and antigen presentation. This Rattus norvegicus (Rat) protein is Antigen peptide transporter 1 (Tap1).